The chain runs to 555 residues: Solute carrier family 2, facilitated glucose transporter member 10 (555 aa).

Residues 1-15 are Cytoplasmic-facing; it reads MGLSSPTLILAATVS. A helical transmembrane segment spans residues 16–36; that stretch reads LLGGIVFGYELGIISGALLVL. Topologically, residues 37 to 48 are extracellular; it reads KTVYQLTCFEQE. The chain crosses the membrane as a helical span at residues 49–69; sequence ALVSAVLFGALLASLIGGIII. The Cytoplasmic portion of the chain corresponds to 70–82; the sequence is DRWGRRTAILASN. A helical transmembrane segment spans residues 83 to 103; that stretch reads LVVLAGSIILIATSTFWWLIV. At 104–105 the chain is on the extracellular side; it reads GR. A helical transmembrane segment spans residues 106-126; that stretch reads VTIGFAISISSMACCIYVSEI. Over 127 to 132 the chain is Cytoplasmic; that stretch reads VRPHQR. A helical transmembrane segment spans residues 133 to 153; sequence GMLVSLYETGITVGILISYAM. Topologically, residues 154-165 are extracellular; sequence NYFLSGVNESWK. Asn161 carries N-linked (GlcNAc...) asparagine glycosylation. Residues 166 to 186 traverse the membrane as a helical segment; the sequence is YMFGLAIVPAAFQFISILFLP. The Cytoplasmic segment spans residues 187–240; sequence SKPHKLNFWEQDTDDGFIELEETGEAGEFKPDTYDRQYTFLDLFRSKDNMRTRT. The chain crosses the membrane as a helical span at residues 241–261; the sequence is LLGLGLVLFQQFTGQPNVLYY. 250–251 contributes to the D-glucose binding site; sequence QQ. Over 262-277 the chain is Extracellular; the sequence is ASTIFQSVGFQSNSSA. A glycan (N-linked (GlcNAc...) asparagine) is linked at Asn274. Residues 278-298 traverse the membrane as a helical segment; sequence VLASVGLGVVKVASTLIAICF. Topologically, residues 299 to 305 are cytoplasmic; sequence ADKAGRR. A helical transmembrane segment spans residues 306–326; it reads ILLLAGCIVMTIAITGIGIVS. Residues 327 to 415 are Extracellular-facing; sequence FTVKMDSHRD…ASPELPSNYT (89 aa). N-linked (GlcNAc...) asparagine glycosylation is found at Asn344, Asn351, Asn400, and Asn413. A helical membrane pass occupies residues 416–436; it reads ILNWITLLSMMAFVSAFSIGF. Topologically, residues 437-464 are cytoplasmic; it reads GPMTWIVLSEIYPADIRGRAFAFCNSFN. Trp441 is a D-glucose binding site. Residues 465 to 483 form a helical membrane-spanning segment; that stretch reads WAANLLITLTFLDVIASIG. Over 484–485 the chain is Extracellular; sequence LS. A helical membrane pass occupies residues 486–506; the sequence is WTFLLYGVVGLLAIAFIYFFI. Residues 507-555 are Cytoplasmic-facing; the sequence is PETKGQSLEEIDKQFSTKRILQKRETSKGVGKRPSSGPPYQRIGKASPS. The segment at 528–555 is disordered; the sequence is QKRETSKGVGKRPSSGPPYQRIGKASPS.

This sequence belongs to the major facilitator superfamily. Sugar transporter (TC 2.A.1.1) family. Glucose transporter subfamily.

It is found in the endomembrane system. The protein localises to the cytoplasm. The protein resides in the perinuclear region. It catalyses the reaction D-glucose(out) = D-glucose(in). Facilitative glucose transporter required for the development of the cardiovascular system. This is Solute carrier family 2, facilitated glucose transporter member 10 from Xenopus tropicalis (Western clawed frog).